The primary structure comprises 692 residues: Elongation factor G (692 aa).

In terms of domain architecture, tr-type G spans 8 to 283; the sequence is NRIRNIGIAA…AVIDYLPAPT (276 aa). GTP-binding positions include 17–24, 81–85, and 135–138; these read AHIDAGKT, DTPGH, and NKMD.

This sequence belongs to the TRAFAC class translation factor GTPase superfamily. Classic translation factor GTPase family. EF-G/EF-2 subfamily.

Its subcellular location is the cytoplasm. Its function is as follows. Catalyzes the GTP-dependent ribosomal translocation step during translation elongation. During this step, the ribosome changes from the pre-translocational (PRE) to the post-translocational (POST) state as the newly formed A-site-bound peptidyl-tRNA and P-site-bound deacylated tRNA move to the P and E sites, respectively. Catalyzes the coordinated movement of the two tRNA molecules, the mRNA and conformational changes in the ribosome. In Helicobacter pylori (strain J99 / ATCC 700824) (Campylobacter pylori J99), this protein is Elongation factor G (fusA).